The sequence spans 249 residues: Purine nucleoside phosphorylase ML0918 (249 aa).

3 residues coordinate Zn(2+): histidine 72, cysteine 109, and histidine 126.

The protein belongs to the purine nucleoside phosphorylase YfiH/LACC1 family. In terms of assembly, homodimer. The cofactor is Cu(2+). Requires Zn(2+) as cofactor.

It carries out the reaction adenosine + phosphate = alpha-D-ribose 1-phosphate + adenine. The catalysed reaction is S-methyl-5'-thioadenosine + phosphate = 5-(methylsulfanyl)-alpha-D-ribose 1-phosphate + adenine. It catalyses the reaction inosine + phosphate = alpha-D-ribose 1-phosphate + hypoxanthine. The enzyme catalyses adenosine + H2O + H(+) = inosine + NH4(+). Functionally, purine nucleoside enzyme that catalyzes the phosphorolysis of adenosine and inosine nucleosides, yielding D-ribose 1-phosphate and the respective free bases, adenine and hypoxanthine. Also catalyzes the phosphorolysis of S-methyl-5'-thioadenosine into adenine and S-methyl-5-thio-alpha-D-ribose 1-phosphate. Also has adenosine deaminase activity. This is Purine nucleoside phosphorylase ML0918 from Mycobacterium leprae (strain TN).